The following is a 148-amino-acid chain: Basic leucine zipper 4 (148 aa).

One can recognise a bZIP domain in the interval 48–97 (DDKKRRRTISNRESAKRSRMKKKKRFEELTEEVNRLNIRNQELKNRLANV). The interval 50–70 (KKRRRTISNRESAKRSRMKKK) is disordered. Positions 50 to 72 (KKRRRTISNRESAKRSRMKKKKR) are basic motif. Residues 76–90 (LTEEVNRLNIRNQEL) form a leucine-zipper region.

It is found in the nucleus. In terms of biological role, probable transcription factor involved in somatic embryogenesis. Acts as a positive regulator of BHLH109. The chain is Basic leucine zipper 4 from Arabidopsis thaliana (Mouse-ear cress).